Consider the following 212-residue polypeptide: ER lumen protein-retaining receptor 1 (212 aa).

The Lumenal portion of the chain corresponds to 1-4 (MNLF). A helical membrane pass occupies residues 5-24 (RFLGDLSHLLAIILLLLKIW). Over 25-32 (KSRSCAGI) the chain is Cytoplasmic. A helical membrane pass occupies residues 33–52 (SGKSQVLFAVVFTARYLDLF). Residues 47 to 48 (RY) form an interaction with the K-D-E-L motif on target proteins region. The Lumenal portion of the chain corresponds to 53–58 (TNYISL). Residues 59-79 (YNTCMKVVYIACSFTTVWLIY) traverse the membrane as a helical segment. Residues 80–92 (SKFKATYDGNHDT) lie on the Cytoplasmic side of the membrane. Residues 93–110 (FRVEFLVVPTAILAFLVN) form a helical membrane-spanning segment. At 111–116 (HDFTPL) the chain is on the lumenal side. Residues 117-135 (EILWTFSIYLESVAILPQL) traverse the membrane as a helical segment. The Cytoplasmic portion of the chain corresponds to 136-149 (FMVSKTGEAETITS). A helical transmembrane segment spans residues 150-168 (HYLFALGVYRTLYLFNWIW). Positions 159–169 (RTLYLFNWIWR) are interaction with the K-D-E-L motif on target proteins. Residues 169-178 (RYHFEGFFDL) are Lumenal-facing. The chain crosses the membrane as a helical span at residues 179–199 (IAIVAGLVQTVLYCDFFYLYI). The Cytoplasmic portion of the chain corresponds to 200–212 (TKVLKGKKLSLPA). Residues 204–207 (KGKK) are important for recycling of cargo proteins with the sequence motif K-D-E-L from the Golgi to the endoplasmic reticulum. Ser-209 carries the post-translational modification Phosphoserine; by PKA.

It belongs to the ERD2 family. Upon ligand binding the receptor oligomerizes and interacts with components of the transport machinery such as ARFGAP1 and ARF1. Post-translationally, phosphorylation by PKA at Ser-209 is required for endoplasmic reticulum retention function.

It is found in the golgi apparatus membrane. It localises to the cytoplasmic vesicle. Its subcellular location is the COPI-coated vesicle membrane. The protein resides in the endoplasmic reticulum membrane. The protein localises to the endoplasmic reticulum-Golgi intermediate compartment membrane. In terms of biological role, receptor for the C-terminal sequence motif K-D-E-L that is present on endoplasmic reticulum resident proteins and that mediates their recycling from the Golgi back to the endoplasmic reticulum. This Homo sapiens (Human) protein is ER lumen protein-retaining receptor 1 (KDELR1).